The chain runs to 164 residues: FMN reductase (NADH) RutF (164 aa).

Belongs to the non-flavoprotein flavin reductase family. RutF subfamily.

The catalysed reaction is FMNH2 + NAD(+) = FMN + NADH + 2 H(+). Functionally, catalyzes the reduction of FMN to FMNH2 which is used to reduce pyrimidine by RutA via the Rut pathway. The chain is FMN reductase (NADH) RutF from Enterobacter cloacae subsp. cloacae (strain ATCC 13047 / DSM 30054 / NBRC 13535 / NCTC 10005 / WDCM 00083 / NCDC 279-56).